The primary structure comprises 289 residues: Probable early E4 33 kDa protein (289 aa).

Belongs to the adenoviridae E4 30 to 34 kDa protein family. As to quaternary structure, interacts with E1B-55k.

It localises to the host nucleus. The protein resides in the host cytoplasm. Its function is as follows. Plays a major role to prevent cellular inhibition of viral genome replication by nuclear bodies. Assembles an SCF-like E3 ubiquitin ligase complex based on the cellular proteins ELOB, ELOC, CUL5 and RBX1, in cooperation with viral E1B-55K. This viral RING-type ligase ubiquitinates cellular substrates prior to proteasomal degradation: p53/TP53, LIG4, MRE11-RAD50-NBS1 (MRN) complex, ITGA3, DAXX and BLM. The sequence is that of Probable early E4 33 kDa protein from Mus musculus (Mouse).